A 373-amino-acid chain; its full sequence is Putative zinc finger protein 012R (373 aa).

Residues 2 to 29 form a C2H2-type zinc finger; it reads FECTHCDLHFESKSKLATHQKTKKCTAH.

This sequence belongs to the IIV-6 302L family.

This Invertebrate iridescent virus 3 (IIV-3) protein is Putative zinc finger protein 012R.